The chain runs to 236 residues: Small ribosomal subunit protein uS3c (236 aa).

The region spanning 47–127 (VRKYVRSSSR…KLNMTLSQVA (81 aa)) is the KH type-2 domain.

It belongs to the universal ribosomal protein uS3 family. Part of the 30S ribosomal subunit.

It is found in the plastid. The protein resides in the chloroplast. The polypeptide is Small ribosomal subunit protein uS3c (rps3) (Zygnema circumcarinatum (Green alga)).